Reading from the N-terminus, the 1476-residue chain is ABC-type transporter FG02316 (1476 aa).

N2 carries N-linked (GlcNAc...) asparagine glycosylation. Transmembrane regions (helical) follow at residues 23-43 (FTLLFEESILVVPITALLLLA), 64-84 (WLYCKIILCLLLLASQIAFLV), 97-117 (SLPAAALSIVASITLLGLSYV), 156-176 (AAITALISTVVKILMLSAETI), 266-286 (ILFIIFPRLCFIGFTFCQPFL), 305-325 (QGYGLIGAWFLVFIGLAVTTG), 384-404 (VWANLIEIVIAVYLLGRQLGL), 407-427 (LIPVGAAIFSIVGSVIAVSFV), 485-505 (LLIWNMVLAYLAPIFAPVLSF), and 532-552 (LFALLQEPLASFVTSLSSFMG). The region spanning 274–552 (LCFIGFTFCQ…FVTSLSSFMG (279 aa)) is the ABC transmembrane type-1 1 domain. The interval 586–615 (ISGVSSSEEKHPVSPIQESMMKTEPSGDSP) is disordered. The ABC transporter 1 domain occupies 622 to 847 (IRNASFGYDR…SDNYVSHSDV (226 aa)). N624 carries N-linked (GlcNAc...) asparagine glycosylation. 654 to 661 (GPVGSGKS) is a binding site for ATP. N-linked (GlcNAc...) asparagine glycans are attached at residues N682, N696, N798, and N836. The disordered stretch occupies residues 842 to 870 (VSHSDVSSPDGARSKAPSSGPASSSAPVP). Residues 855 to 870 (SKAPSSGPASSSAPVP) are compositionally biased toward low complexity. The next 6 membrane-spanning stretches (helical) occupy residues 906–926 (MNAIGWIPTMVFVLAICAYIF), 950–970 (LGYYLGVYAMLGALSIIFLVL), 1021–1041 (LIDMDLPLSALNTFATFVLCI), 1045–1065 (ILIAVGSYYTAIAFPFLLATL), 1137–1157 (WLTLVLDMIVTIIAVLVVVLV), and 1167–1187 (GLIGVALVNIIQFSQHLKLLM). The 280-residue stretch at 916-1195 (VFVLAICAYI…LMTFWTTLET (280 aa)) folds into the ABC transmembrane type-1 2 domain. Positions 1232–1464 (ILFDQVSAGY…GPDASTFASM (233 aa)) constitute an ABC transporter 2 domain. N-linked (GlcNAc...) asparagine glycosylation occurs at N1250. Position 1265 to 1272 (1265 to 1272 (GRTGSGKS)) interacts with ATP. N1414 carries an N-linked (GlcNAc...) asparagine glycan.

This sequence belongs to the ABC transporter superfamily. ABCC family. Conjugate transporter (TC 3.A.1.208) subfamily.

The protein resides in the cell membrane. Its function is as follows. ABC-type transporter; part of the gene cluster that mediates the biosynthesis of the fusahexin, a cyclic hydrophobic hexapeptide with the amino acid sequence cyclo-(D-Ala-L-Leu-D-allo-Thr-L-Pro-D-Leu-L-Leu) that plays an important role in cell surface hydrophobicity. The chain is ABC-type transporter FG02316 from Gibberella zeae (strain ATCC MYA-4620 / CBS 123657 / FGSC 9075 / NRRL 31084 / PH-1) (Wheat head blight fungus).